Reading from the N-terminus, the 941-residue chain is HMG box transcription factor BBX (941 aa).

Over residues 1-18 (MKGSNRNKDHSAEGEGVG) the composition is skewed to basic and acidic residues. 4 disordered regions span residues 1–21 (MKGS…GKRP), 39–80 (FSEE…EQRA), 157–200 (VKSP…FGMA), and 221–242 (TPEV…LRQK). Acidic residues-rich tracts occupy residues 39 to 52 (FSEE…EEDI) and 63 to 75 (LEQD…DDES). A DNA-binding region (HMG box) is located at residues 80-148 (ARRPMNAFLL…AFMKANPGYK (69 aa)). Positions 177-191 (SSRDLPSPKKAKTEE) are enriched in basic and acidic residues. Residue serine 243 is modified to Phosphoserine. Residues 326–370 (GRIKELEKGKEEKEIKMEKTDETRLQKEAEFEKSAKENLRDSKEL) adopt a coiled-coil conformation. A Glycyl lysine isopeptide (Lys-Gly) (interchain with G-Cter in SUMO2) cross-link involves residue lysine 385. The segment at 438-482 (IEDPAALNKPEKLKKKKKKSKMDRHGNDKSTPKKTCKKRQSSESD) is disordered. Over residues 449–459 (KLKKKKKKSKM) the composition is skewed to basic residues. Serine 478 and serine 485 each carry phosphoserine. 2 stretches are compositionally biased toward basic and acidic residues: residues 499–508 (GIEKLGDTPR) and 536–552 (KKMS…ESRP). Disordered stretches follow at residues 499–600 (GIEK…SDCH) and 635–677 (NVDR…KKTK). A Glycyl lysine isopeptide (Lys-Gly) (interchain with G-Cter in SUMO2) cross-link involves residue lysine 573. Over residues 661–670 (TFSQSGTSGS) the composition is skewed to low complexity. A Glycyl lysine isopeptide (Lys-Gly) (interchain with G-Cter in SUMO2) cross-link involves residue lysine 696. At serine 704 the chain carries Phosphoserine. Disordered stretches follow at residues 714 to 771 (PVPR…DKWS), 803 to 888 (IPSI…SSTP), and 912 to 941 (HRGQ…CADQ). Over residues 723–742 (GNVSSEPTKTSKGPFQSQKK) the composition is skewed to polar residues. Basic residues predominate over residues 743-757 (NLFHKIVSKYKHKKE). Over residues 758 to 771 (KPNVPEKGSGDKWS) the composition is skewed to basic and acidic residues. Polar residues predominate over residues 805–817 (SIFNTPEPTTTQE). Position 822 is a phosphoserine (serine 822). Residues 823-834 (QKRKARKTKITH) are compositionally biased toward basic residues. A Phosphoserine modification is found at serine 844. A compositionally biased stretch (basic and acidic residues) spans 866 to 882 (TETDCNDKCSHNTEVGE).

It localises to the nucleus. Functionally, transcription factor that is necessary for cell cycle progression from G1 to S phase. This Homo sapiens (Human) protein is HMG box transcription factor BBX (BBX).